The chain runs to 656 residues: MSSRALRKLQRQRQTELLEEALDSESDEDDEFSSTSGKKVVNVFEILEKENNAINSEAEKSVSEEEQDEPLVEGESPIVSTNKKAKNKKKKKKQQKKKKVTGKRDLDNQSSDNEKLEGLESSKNIDDDIDEIEKAAAELKLKYREQDQVEHVAGVEESATIPLDKELDEKLNKLLGVNISMLNPDLEIRKIFGRIVEKRSVNARHDNLRRKRHVLVQPQEGWPPLVRSGLGMKLTGQSQDLECFFEITQSRAYQEVQETFEYYVQTYDPNNLLMLLRSHPFHIDTLLQVSEIIDQQGDHELSAELVARGLYAFDSILHPRFNLATGATRLPFAIPSNRRLFLCIWRYLQSLQSRGCWRTVFEFCKALLQFDMSDPYAIGTCIDIYALRRREFAWIIDFANYLENSNKISDTPNMLYSSALAMFYVHGDTTDTRASMLAAFERAPYMLSELLDTLNISFTKSSIPSPQDPVQELHSAMYALYAKDSWSDPTVLAFINSILEKETVTLHDVEGQFAELTENLSRRVILLNEQSLRKFLPQRILQGTILSFDPLPPDTYLSESQVFGRDISRRIASFLSDYLSRAREVNENEEEPPAHEFDLPPAEQLLQQIESEVGEESEDGTPVMTRLRSFFGSLFTSTNSETEPAEESTEEMGQGD.

A compositionally biased stretch (basic residues) spans 1-11 (MSSRALRKLQR). Disordered regions lie at residues 1–35 (MSSR…FSST), 51–122 (NNAI…LESS), and 634–656 (LFTS…GQGD). Residues 17–32 (LLEEALDSESDEDDEF) show a composition bias toward acidic residues. The segment covering 51–63 (NNAINSEAEKSVS) has biased composition (basic and acidic residues). A phosphoserine mark is found at S56, S61, and S63. The span at 83–101 (KKAKNKKKKKKQQKKKKVT) shows a compositional bias: basic residues. The segment covering 102-122 (GKRDLDNQSSDNEKLEGLESS) has biased composition (basic and acidic residues). A phosphoserine mark is found at S110 and S111.

It belongs to the TCF25 family. As to quaternary structure, component of the ribosome quality control complex (RQC), composed of the E3 ubiquitin ligase rkr1/ltn1, rqc1 and mtr1/rqc2, as well as cdc48 and its ubiquitin-binding cofactors. RQC forms a stable complex with 60S ribosomal subunits.

It localises to the cytoplasm. Its function is as follows. Component of the ribosome quality control complex (RQC), a ribosome-associated complex that mediates ubiquitination and extraction of incompletely synthesized nascent chains for proteasomal degradation. Within the RQC complex, rqc1 is essential for the recruitment of cdc48 to incompletely synthesized nascent polypeptides that are ubiquitinated by rkr1/ltn1. In Schizosaccharomyces pombe (strain 972 / ATCC 24843) (Fission yeast), this protein is Ribosome quality control complex subunit 1.